A 294-amino-acid polypeptide reads, in one-letter code: Probable ABC transporter permease protein YqgI (294 aa).

6 consecutive transmembrane segments (helical) span residues 14–34 (FGLC…YIII), 66–86 (FYIL…GGVF), 99–121 (FIRT…FGLL), 126–148 (LTGW…LPVM), 190–210 (IITG…ALLF), and 260–280 (AIAN…NLAA). An ABC transmembrane type-1 domain is found at 62-280 (LFNSFYILFI…ISVLVFNLAA (219 aa)).

Belongs to the binding-protein-dependent transport system permease family. CysTW subfamily.

Its subcellular location is the cell membrane. In terms of biological role, part of the binding-protein-dependent transport system YqgGHIJK. Probably responsible for the translocation of the substrate across the membrane. The chain is Probable ABC transporter permease protein YqgI (yqgI) from Bacillus subtilis (strain 168).